The chain runs to 134 residues: UPF0412 protein YaaI (134 aa).

The N-terminal stretch at 1–23 (MRSVLTISASLLFGLALSSVAHA) is a signal peptide.

It belongs to the UPF0412 family.

The sequence is that of UPF0412 protein YaaI from Salmonella choleraesuis (strain SC-B67).